We begin with the raw amino-acid sequence, 209 residues long: Translation initiation factor IF-3 (209 aa).

The protein belongs to the IF-3 family. Monomer.

The protein localises to the cytoplasm. Functionally, IF-3 binds to the 30S ribosomal subunit and shifts the equilibrium between 70S ribosomes and their 50S and 30S subunits in favor of the free subunits, thus enhancing the availability of 30S subunits on which protein synthesis initiation begins. The sequence is that of Translation initiation factor IF-3 from Chlorobium phaeovibrioides (strain DSM 265 / 1930) (Prosthecochloris vibrioformis (strain DSM 265)).